The sequence spans 163 residues: ECF RNA polymerase sigma factor SigM (163 aa).

The Polymerase core binding signature appears at 30 to 43 (DLLQETFMRAYIHI). A DNA-binding region (H-T-H motif) is located at residues 127 to 146 (YKEASHIMNISEANFKSVLF).

This sequence belongs to the sigma-70 factor family. ECF subfamily. Interacts with the N-terminus of YhdL, which is probably its anti-sigma factor. Interacts transiently with the RNAP core.

Functionally, sigma factors are initiation factors that promote the attachment of RNA polymerase (RNAP) to specific initiation sites and are then released. Extracytoplasmic function (ECF) sigma factors are held in an inactive form by a cognate anti-sigma factor (YhdL) until released. This sigma factor is involved in the maintenance of membrane and cell wall integrity in response to environmental stresses including salt, acid, ethanol and antibiotics stress. Partially regulates transcription from a number of genes including disA. Associates with RNAP core under all growth phases. The chain is ECF RNA polymerase sigma factor SigM (sigM) from Bacillus subtilis (strain 168).